Here is a 720-residue protein sequence, read N- to C-terminus: Polyribonucleotide nucleotidyltransferase (720 aa).

The Mg(2+) site is built by aspartate 485 and aspartate 491. Residues 552 to 615 (PRIHTIKINP…EAIRRIQALT (64 aa)) enclose the KH domain. In terms of domain architecture, S1 motif spans 621–689 (GRIYEGKVTR…RQGRIRLSIK (69 aa)). Residues 697–720 (PAAESVAESAPAQEAVVEQVPMTE) form a disordered region. The segment covering 698–720 (AAESVAESAPAQEAVVEQVPMTE) has biased composition (low complexity).

It belongs to the polyribonucleotide nucleotidyltransferase family. Component of the RNA degradosome, which is a multiprotein complex involved in RNA processing and mRNA degradation. The cofactor is Mg(2+).

Its subcellular location is the cytoplasm. It carries out the reaction RNA(n+1) + phosphate = RNA(n) + a ribonucleoside 5'-diphosphate. In terms of biological role, involved in mRNA degradation. Catalyzes the phosphorolysis of single-stranded polyribonucleotides processively in the 3'- to 5'-direction. In Tolumonas auensis (strain DSM 9187 / NBRC 110442 / TA 4), this protein is Polyribonucleotide nucleotidyltransferase.